Reading from the N-terminus, the 339-residue chain is 1-aminocyclopropane-1-carboxylate deaminase (339 aa).

The residue at position 52 (Lys-52) is an N6-(pyridoxal phosphate)lysine. Ser-79 serves as the catalytic Nucleophile.

This sequence belongs to the ACC deaminase/D-cysteine desulfhydrase family. Homotrimer. Pyridoxal 5'-phosphate serves as cofactor.

It carries out the reaction 1-aminocyclopropane-1-carboxylate + H2O = 2-oxobutanoate + NH4(+). Functionally, catalyzes a cyclopropane ring-opening reaction, the irreversible conversion of 1-aminocyclopropane-1-carboxylate (ACC) to ammonia and alpha-ketobutyrate. Allows growth on ACC as a nitrogen source. The chain is 1-aminocyclopropane-1-carboxylate deaminase from Rhizobium leguminosarum bv. viciae.